An 830-amino-acid chain; its full sequence is WD repeat-containing protein 75 (830 aa).

WD repeat units lie at residues 4–42, 46–85, 89–130, 144–183, 192–230, 236–275, 278–317, 323–361, and 375–422; these read EGVR…KVYS, EECV…KLWD, GILI…QLVS, RQLT…YFFK, LPST…RLWR, QKYT…VEWR, SEKN…TVIH, SAVI…QFYS, and QQEY…KLWN. A Glycyl lysine isopeptide (Lys-Gly) (interchain with G-Cter in SUMO2) cross-link involves residue Lys426. WD repeat units lie at residues 429-473, 486-524, 528-568, and 573-610; these read GFVL…KVWI, AWTC…TIWD, WELK…CCWN, and SIQW…FVFK. Ser663 and Ser671 each carry phosphoserine. Residue Lys675 forms a Glycyl lysine isopeptide (Lys-Gly) (interchain with G-Cter in SUMO2) linkage. The interval 761 to 807 is disordered; the sequence is KSAEEVPDDVDMEGNKESDDSDEEYDLTEKDKETNNNTDLGEDAIHQ. Phosphoserine occurs at positions 778 and 781. Tyr785 is subject to Phosphotyrosine. Phosphoserine is present on Ser811.

In terms of assembly, component of the proposed t-UTP subcomplex of the ribosomal small subunit (SSU) processome. SSU processome is composed of more than 70 proteins and the RNA chaperone small nucleolar RNA (snoRNA) U3.

It is found in the nucleus. It localises to the nucleolus. Its function is as follows. Ribosome biogenesis factor. Part of the small subunit (SSU) processome, first precursor of the small eukaryotic ribosomal subunit. During the assembly of the SSU processome in the nucleolus, many ribosome biogenesis factors, an RNA chaperone and ribosomal proteins associate with the nascent pre-rRNA and work in concert to generate RNA folding, modifications, rearrangements and cleavage as well as targeted degradation of pre-ribosomal RNA by the RNA exosome. Involved in nucleolar processing of pre-18S ribosomal RNA. Required for optimal pre-ribosomal RNA transcription by RNA polymerase I. This Mus musculus (Mouse) protein is WD repeat-containing protein 75 (Wdr75).